We begin with the raw amino-acid sequence, 88 residues long: Conotoxin MaIr34 (88 aa).

The first 21 residues, 1–21, serve as a signal peptide directing secretion; it reads MKLTCVIVAVLFLTAWTFVMA. Residues 22–53 constitute a propeptide that is removed on maturation; the sequence is DDPRDGPDTAVRGGKRFWKARNEMNSAASKLN. Intrachain disulfides connect cysteine 57-cysteine 75, cysteine 64-cysteine 79, and cysteine 74-cysteine 83.

The protein belongs to the conotoxin O1 superfamily. As to expression, expressed by the venom duct.

It localises to the secreted. This is Conotoxin MaIr34 from Conus marmoreus (Marble cone).